We begin with the raw amino-acid sequence, 848 residues long: Heat shock protein 70 homolog lhs1 (848 aa).

A signal peptide spans 1–21; that stretch reads MKRSVLTIILFFSCQFWHAFA. N-linked (GlcNAc...) asparagine glycans are attached at residues Asn134, Asn247, Asn359, Asn457, Asn462, Asn488, Asn555, Asn632, Asn678, Asn733, and Asn817. A disordered region spans residues 784-848; it reads KLKAKKGASS…QQEIDDSDEL (65 aa). 2 stretches are compositionally biased toward polar residues: residues 807 to 822 and 829 to 840; these read TNDI…TSTQ and ASVTQRPSSLQQ. A Prevents secretion from ER motif is present at residues 845–848; the sequence is SDEL.

This sequence belongs to the heat shock protein 70 family.

It localises to the endoplasmic reticulum lumen. The enzyme catalyses ATP + H2O = ADP + phosphate + H(+). In terms of biological role, chaperone required for protein translocation and folding in the endoplasmic reticulum. The protein is Heat shock protein 70 homolog lhs1 of Schizosaccharomyces pombe (strain 972 / ATCC 24843) (Fission yeast).